The following is a 428-amino-acid chain: C4-dicarboxylate transport protein (428 aa).

9 consecutive transmembrane segments (helical) span residues 4–24, 44–64, 76–96, 142–162, 184–204, 222–242, 289–309, 326–346, and 352–372; these read SLFK…ILLG, LIKM…IAGM, VALL…LIIV, IGAF…MFGF, VIFG…FGAM, LIVC…GSIA, VVGL…SIYL, IFHQ…AAGV, and IVLA…LALI.

This sequence belongs to the dicarboxylate/amino acid:cation symporter (DAACS) (TC 2.A.23) family.

It is found in the cell inner membrane. Responsible for the transport of dicarboxylates such as succinate, fumarate, and malate from the periplasm across the membrane. The chain is C4-dicarboxylate transport protein from Citrobacter koseri (strain ATCC BAA-895 / CDC 4225-83 / SGSC4696).